A 512-amino-acid polypeptide reads, in one-letter code: tRNA-2-methylthio-N(6)-dimethylallyladenosine synthase (512 aa).

The segment at 1 to 20 (MLQQADGVSPDRSSCDTPAP) is disordered. The MTTase N-terminal domain maps to 21 to 137 (RTFEVRTYGC…LPTLLDRARH (117 aa)). Cys-30, Cys-66, Cys-100, Cys-174, Cys-178, and Cys-181 together coordinate [4Fe-4S] cluster. Residues 160-397 (RESAYAAWVS…ELQERISWEE (238 aa)) form the Radical SAM core domain. The region spanning 399-469 (RAQIGREVEL…PHHLIADAGP (71 aa)) is the TRAM domain. A compositionally biased stretch (basic and acidic residues) spans 470-486 (AEHRRTRAGDAHAEGRT). Residues 470-512 (AEHRRTRAGDAHAEGRTPKTGVGLGMPGIGAPEPAPVTQGCAL) form a disordered region.

Belongs to the methylthiotransferase family. MiaB subfamily. Monomer. It depends on [4Fe-4S] cluster as a cofactor.

The protein resides in the cytoplasm. The catalysed reaction is N(6)-dimethylallyladenosine(37) in tRNA + (sulfur carrier)-SH + AH2 + 2 S-adenosyl-L-methionine = 2-methylsulfanyl-N(6)-dimethylallyladenosine(37) in tRNA + (sulfur carrier)-H + 5'-deoxyadenosine + L-methionine + A + S-adenosyl-L-homocysteine + 2 H(+). In terms of biological role, catalyzes the methylthiolation of N6-(dimethylallyl)adenosine (i(6)A), leading to the formation of 2-methylthio-N6-(dimethylallyl)adenosine (ms(2)i(6)A) at position 37 in tRNAs that read codons beginning with uridine. This chain is tRNA-2-methylthio-N(6)-dimethylallyladenosine synthase, found in Mycolicibacterium gilvum (strain PYR-GCK) (Mycobacterium gilvum (strain PYR-GCK)).